The chain runs to 360 residues: A-type ATP synthase subunit C (360 aa).

The protein belongs to the V-ATPase V0D/AC39 subunit family. As to quaternary structure, has multiple subunits, A(3), B(3), C, D, E, F, G, I and K(x); there may be a few other subunits as well.

The protein localises to the cell membrane. Its function is as follows. Component of the A-type ATP synthase that produces ATP from ADP in the presence of a proton gradient across the membrane. The polypeptide is A-type ATP synthase subunit C (Methanosarcina mazei (strain ATCC BAA-159 / DSM 3647 / Goe1 / Go1 / JCM 11833 / OCM 88) (Methanosarcina frisia)).